A 246-amino-acid polypeptide reads, in one-letter code: NAD-dependent protein deacylase (246 aa).

The Deacetylase sirtuin-type domain occupies 1–245 (MKEFITKHRD…ELIREILDNP (245 aa)). 20 to 39 (GAGISAESGIPTFRGSEGLW) contacts NAD(+). Substrate-binding residues include Tyr64 and Arg67. 98-101 (QNVD) is a binding site for NAD(+). His116 (proton acceptor) is an active-site residue. 4 residues coordinate Zn(2+): Cys124, Cys127, Cys146, and Cys149. NAD(+)-binding positions include 186 to 188 (GTS), 212 to 214 (NPE), and Thr230.

This sequence belongs to the sirtuin family. Class III subfamily. Zn(2+) is required as a cofactor.

It is found in the cytoplasm. The catalysed reaction is N(6)-acetyl-L-lysyl-[protein] + NAD(+) + H2O = 2''-O-acetyl-ADP-D-ribose + nicotinamide + L-lysyl-[protein]. The enzyme catalyses N(6)-succinyl-L-lysyl-[protein] + NAD(+) + H2O = 2''-O-succinyl-ADP-D-ribose + nicotinamide + L-lysyl-[protein]. In terms of biological role, NAD-dependent lysine deacetylase and desuccinylase that specifically removes acetyl and succinyl groups on target proteins. Modulates the activities of several proteins which are inactive in their acylated form. The protein is NAD-dependent protein deacylase of Leptospira interrogans serogroup Icterohaemorrhagiae serovar copenhageni (strain Fiocruz L1-130).